Consider the following 215-residue polypeptide: Transmembrane emp24 domain-containing protein 11 (215 aa).

The N-terminal stretch at 1-17 (MQIQTILLCFSFSFSAA) is a signal peptide. The Lumenal portion of the chain corresponds to 18 to 167 (FYFHAGEREE…ILKEQDYQRD (150 aa)). The region spanning 27–125 (EKCIIEDIPS…KLRIHLDIRV (99 aa)) is the GOLD domain. N-linked (GlcNAc...) asparagine glycosylation is present at asparagine 105. Positions 136–171 (QAKDKVNEVTFKLQHLIEQVEQILKEQDYQRDREEN) form a coiled coil. A helical transmembrane segment spans residues 168–185 (REENFRITSEDTNRNVLW). Residues 186 to 215 (WAFAQILIFISVGIFQMKHLKDFFIAKKLV) are Cytoplasmic-facing. Positions 208-209 (FF) match the COPII vesicle coat-binding motif. Positions 208–215 (FFIAKKLV) match the COPI vesicle coat-binding motif.

This sequence belongs to the EMP24/GP25L family.

It localises to the endoplasmic reticulum membrane. Its function is as follows. Part of a complex whose function is to bind Ca(2+) to the ER membrane and thereby regulate the retention of ER resident proteins. This is Transmembrane emp24 domain-containing protein 11 (Tmed11) from Mus musculus (Mouse).